Here is a 662-residue protein sequence, read N- to C-terminus: p-hydroxybenzoic acid efflux pump subunit AaeB (662 aa).

Helical transmembrane passes span 22 to 42, 52 to 72, 76 to 96, 102 to 122, 129 to 149, 161 to 181, 378 to 398, 415 to 435, 439 to 459, 465 to 485, and 491 to 511; these read FAFK…HLQL, AAIV…SGAI, GMLR…IIIA, VVML…SSLV, IFGL…GTPL, EIVL…PRSI, LFWL…IAVV, FLFG…FIMP, QSML…GLEV, GSLG…PMTF, and LDSA…IMLI.

It belongs to the aromatic acid exporter ArAE (TC 2.A.85) family.

The protein localises to the cell inner membrane. In terms of biological role, forms an efflux pump with AaeA. Could function as a metabolic relief valve, allowing to eliminate certain compounds when they accumulate to high levels in the cell. This Pectobacterium atrosepticum (strain SCRI 1043 / ATCC BAA-672) (Erwinia carotovora subsp. atroseptica) protein is p-hydroxybenzoic acid efflux pump subunit AaeB.